The sequence spans 363 residues: tRNA(Met) cytidine acetate ligase (363 aa).

ATP contacts are provided by residues 7–20 (IAEFNPFHNGHKYL), Gly96, Asn152, and Arg175.

This sequence belongs to the TmcAL family.

It is found in the cytoplasm. The catalysed reaction is cytidine(34) in elongator tRNA(Met) + acetate + ATP = N(4)-acetylcytidine(34) in elongator tRNA(Met) + AMP + diphosphate. Its function is as follows. Catalyzes the formation of N(4)-acetylcytidine (ac(4)C) at the wobble position of elongator tRNA(Met), using acetate and ATP as substrates. First activates an acetate ion to form acetyladenylate (Ac-AMP) and then transfers the acetyl group to tRNA to form ac(4)C34. This is tRNA(Met) cytidine acetate ligase from Streptococcus thermophilus (strain ATCC BAA-491 / LMD-9).